Consider the following 210-residue polypeptide: Dephospho-CoA kinase (210 aa).

One can recognise a DPCK domain in the interval 4–201 (IVALTGGICS…NFYIYLSKQN (198 aa)). 12–17 (CSGKTT) is a binding site for ATP.

This sequence belongs to the CoaE family.

The protein resides in the cytoplasm. The enzyme catalyses 3'-dephospho-CoA + ATP = ADP + CoA + H(+). Its pathway is cofactor biosynthesis; coenzyme A biosynthesis; CoA from (R)-pantothenate: step 5/5. Catalyzes the phosphorylation of the 3'-hydroxyl group of dephosphocoenzyme A to form coenzyme A. The sequence is that of Dephospho-CoA kinase from Buchnera aphidicola subsp. Schizaphis graminum (strain Sg).